A 386-amino-acid chain; its full sequence is Putative gustatory receptor 92a (386 aa).

Topologically, residues 1–14 (MFEFLHQMSAPKLS) are cytoplasmic. Residues 15–35 (TSILRYIFRYAQFIGVIFFCL) traverse the membrane as a helical segment. At 36–79 (HTRKDDKTVFIRNWLKWLNVTHRIITFTRFFWVYIASISIKTNR) the chain is on the extracellular side. The N-linked (GlcNAc...) asparagine glycan is linked to Asn54. A helical membrane pass occupies residues 80-100 (VLQVLHGMRLVLSIPNVAVIL). Over 101 to 141 (CYHIFRGPEIIDLINQFLRLFRQVSDLFKTKTPGFGGRREL) the chain is Cytoplasmic. The chain crosses the membrane as a helical span at residues 142-162 (ILILLNLISFAHEQTYLWFTI). At 163 to 169 (RKGFSWR) the chain is on the extracellular side. A helical membrane pass occupies residues 170–190 (FLIDWWCDFYLVSATNIFIHI). At 191–256 (NSIGYLSLGV…YHTSIMFHKL (66 aa)) the chain is on the cytoplasmic side. The helical transmembrane segment at 257 to 277 (FVPLLFLALIYKVLLIALIGF) threads the bilayer. The Extracellular portion of the chain corresponds to 278–287 (NVAVEFYLNS). A helical transmembrane segment spans residues 288-308 (FIFWILLGKHVLDLFLVTVSV). At 309-356 (EGAVNQFLNIGMQFGNVGDLSKFQTTLDTLFLHLRLGHFRVSILGLFD) the chain is on the cytoplasmic side. The helical transmembrane segment at 357 to 377 (VTQMQYLQFLSALLSGLAFIA) threads the bilayer. At 378 to 386 (QYRMQVGNG) the chain is on the extracellular side.

Belongs to the insect chemoreceptor superfamily. Gustatory receptor (GR) family. Gr93a subfamily.

It is found in the cell membrane. Its function is as follows. Probable gustatory receptor which mediates acceptance or avoidance behavior, depending on its substrates. The sequence is that of Putative gustatory receptor 92a (Gr92a) from Drosophila melanogaster (Fruit fly).